We begin with the raw amino-acid sequence, 241 residues long: Proteasome subunit alpha (241 aa).

It belongs to the peptidase T1A family. In terms of assembly, the 20S proteasome core is composed of 14 alpha and 14 beta subunits that assemble into four stacked heptameric rings, resulting in a barrel-shaped structure. The two inner rings, each composed of seven catalytic beta subunits, are sandwiched by two outer rings, each composed of seven alpha subunits. The catalytic chamber with the active sites is on the inside of the barrel. Has a gated structure, the ends of the cylinder being occluded by the N-termini of the alpha-subunits. Is capped by the proteasome-associated ATPase, ARC.

The protein resides in the cytoplasm. It participates in protein degradation; proteasomal Pup-dependent pathway. With respect to regulation, the formation of the proteasomal ATPase ARC-20S proteasome complex, likely via the docking of the C-termini of ARC into the intersubunit pockets in the alpha-rings, may trigger opening of the gate for substrate entry. Interconversion between the open-gate and close-gate conformations leads to a dynamic regulation of the 20S proteasome proteolysis activity. Component of the proteasome core, a large protease complex with broad specificity involved in protein degradation. In Parafrankia sp. (strain EAN1pec), this protein is Proteasome subunit alpha.